Reading from the N-terminus, the 289-residue chain is Orotidine 5'-phosphate decarboxylase (289 aa).

Catalysis depends on Lys-97, which acts as the Proton donor.

The protein belongs to the OMP decarboxylase family. Type 2 subfamily.

The catalysed reaction is orotidine 5'-phosphate + H(+) = UMP + CO2. It participates in pyrimidine metabolism; UMP biosynthesis via de novo pathway; UMP from orotate: step 2/2. This chain is Orotidine 5'-phosphate decarboxylase, found in Petrotoga mobilis (strain DSM 10674 / SJ95).